We begin with the raw amino-acid sequence, 492 residues long: Catalase (492 aa).

Catalysis depends on residues His-65 and Asn-138. Position 348 (Tyr-348) interacts with heme.

It belongs to the catalase family. In terms of assembly, homotetramer. It depends on heme as a cofactor.

Its subcellular location is the cytoplasm. It localises to the cytosol. The protein localises to the peroxisome matrix. It carries out the reaction 2 H2O2 = O2 + 2 H2O. Catalyzes the degradation of hydrogen peroxide (H(2)O(2)) generated by peroxisomal oxidases to water and oxygen, thereby protecting cells from the toxic effects of hydrogen peroxide. This chain is Catalase, found in Soldanella alpina (Alpine snowbell).